A 284-amino-acid chain; its full sequence is Insulin-like growth factor-binding protein 2 (284 aa).

Residues 1 to 21 form the signal peptide; it reads MGLSRYLLGLLLGVLCTPAPA. The IGFBP N-terminal domain maps to 23–106; sequence VLFRCPPCSP…VLGLGTCGKR (84 aa). 6 disulfides stabilise this stretch: cysteine 27–cysteine 56, cysteine 30–cysteine 58, cysteine 38–cysteine 59, cysteine 47–cysteine 62, cysteine 70–cysteine 83, and cysteine 77–cysteine 103. The segment at 108–184 is disordered; the sequence is DTEYGSSQER…KSEDKKRPAR (77 aa). Residues 117 to 127 show a composition bias toward basic and acidic residues; that stretch reads RGTELPEERSD. Low complexity predominate over residues 136–145; it reads EAGPAVAGEA. Positions 152–180 are enriched in basic and acidic residues; sequence KKEMKEIAVTRERANEQQRSKSNKSEDKK. The region spanning 184–266 is the Thyroglobulin type-1 domain; the sequence is RSLCQLQLDQ…SPTIRGDPEC (83 aa). Cystine bridges form between cysteine 187–cysteine 221, cysteine 232–cysteine 243, and cysteine 245–cysteine 266. The Cell attachment site signature appears at 261–263; sequence RGD.

In terms of assembly, interacts with igf1 and igf2.

Its subcellular location is the secreted. IGF-binding proteins prolong the half-life of the IGFs and have been shown to either inhibit or stimulate the growth promoting effects of the IGFs on cell culture. They alter the interaction of IGFs with their cell surface receptors. This chain is Insulin-like growth factor-binding protein 2, found in Xenopus tropicalis (Western clawed frog).